The chain runs to 120 residues: U13-barytoxin-Tl1a (120 aa).

The first 20 residues, 1 to 20 (MKTIIVFLSLLVLATKFGDA), serve as a signal peptide directing secretion. 3 cysteine pairs are disulfide-bonded: Cys-75/Cys-90, Cys-82/Cys-95, and Cys-89/Cys-109.

The protein belongs to the neurotoxin 14 (magi-1) family. 05 (ICK-7) subfamily. ICK-7 sub-subfamily. In terms of tissue distribution, expressed by the venom gland.

The protein resides in the secreted. Functionally, ion channel inhibitor. The chain is U13-barytoxin-Tl1a from Trittame loki (Brush-footed trapdoor spider).